Consider the following 42-residue polypeptide: Crotamine-IV-3 (42 aa).

Cystine bridges form between C4–C37, C11–C31, and C19–C38.

Belongs to the crotamine-myotoxin family. In terms of assembly, monomer. In terms of tissue distribution, expressed by the venom gland.

The protein localises to the secreted. Cationic peptide that possesses multiple functions. It acts as a cell-penetrating peptide (CPP), and as a potent voltage-gated potassium channel (Kv) inhibitor. It exhibits antimicrobial activities, and hind limb paralysis. It also induces potent blockade of neuromuscular transmission in young chicken biventer cervicis preparation and potent myotoxic effect. In mice, it induces myonecrosis, upon intramuscular or subcutaneous injections. The protein is Crotamine-IV-3 of Crotalus durissus cumanensis (South American rattlesnake).